Consider the following 958-residue polypeptide: Unconventional myosin-Ih (958 aa).

One can recognise a Myosin motor domain in the interval 12–691 (GVQDFVLLDA…TLFATEDAFE (680 aa)). Residue 105-112 (GESGAGKT) participates in ATP binding. Serine 365 bears the Phosphoserine mark. An actin-binding region spans residues 568 to 590 (LSSLLEILISKEPSYIRCIKPNE). 2 consecutive IQ domains span residues 694 to 716 (KHQLVSRIQATYKGCLGRREYMK) and 717 to 746 (KRQAATKLEAHWRGVLARKEIKRRRWAVQI). Residues 773-955 (RKNYILNLRY…NGQLRVVSAG (183 aa)) form the TH1 domain.

This sequence belongs to the TRAFAC class myosin-kinesin ATPase superfamily. Myosin family. In terms of tissue distribution, highly expressed in the central nervous system, including the forebrain, midbrain and lower medulla. In the lower medulla, it is broadly expressed throughout the reticular formation. It is expressed in the retrotrapezoid nucleus and the nucleus of the solitary tract, as well as motor neurons of the facial, vagal and ambiguus nuclei. Expressed in neonatal inner-ear organs.

Its function is as follows. Myosins are actin-based motor molecules with ATPase activity. Unconventional myosins serve in intracellular movements. Their highly divergent tails are presumed to bind to membranous compartments, which would be moved relative to actin filaments. This Mus musculus (Mouse) protein is Unconventional myosin-Ih (Myo1h).